The primary structure comprises 89 residues: LYR motif-containing protein 4 (89 aa).

Belongs to the complex I LYR family.

The protein localises to the mitochondrion. It is found in the nucleus. It participates in cofactor biosynthesis; iron-sulfur cluster biosynthesis. Its function is as follows. Required for nuclear and mitochondrial iron-sulfur protein biosynthesis. The chain is LYR motif-containing protein 4 (lyrm4) from Danio rerio (Zebrafish).